The primary structure comprises 1039 residues: 3',5'-cyclic-AMP phosphodiesterase 4 (1039 aa).

An N-terminal signal peptide occupies residues 1–29; the sequence is MFNNNNNDKINNTMMSNNPSGQIINLESI. N-linked (GlcNAc...) asparagine glycosylation is found at N11, N34, and N37. Topologically, residues 30 to 201 are extracellular; that stretch reads DCNSNLSNTT…KKKVNAESLR (172 aa). Disordered regions lie at residues 40–63 and 116–181; these read SIKD…NNIN and IIPN…NNSI. The segment covering 45 to 63 has biased composition (low complexity); that stretch reads NNNNNNNNNNNNNINNNIN. N119, N124, N131, N167, and N178 each carry an N-linked (GlcNAc...) asparagine glycan. Residues 202–222 form a helical membrane-spanning segment; that stretch reads GPIIFQNFILYTFFLIVIGTA. Residues 223-226 lie on the Cytoplasmic side of the membrane; sequence EGTS. Residues 227–247 traverse the membrane as a helical segment; that stretch reads WAPEIRVANFVPYCVMCVVLL. Over 248–256 the chain is Extracellular; that stretch reads EFNRLHKKP. Residues 257–277 form a helical membrane-spanning segment; sequence LLRIIFPLYTSNIPFAYMCIF. Topologically, residues 278–283 are cytoplasmic; sequence SREARK. The chain crosses the membrane as a helical span at residues 284–304; that stretch reads YVLISLLFFASCLCIFLQSGI. Residues 305 to 310 are Extracellular-facing; the sequence is PDLRKH. A helical transmembrane segment spans residues 311–331; that stretch reads IVIFCIIFMINYGCCILFMDW. The Cytoplasmic segment spans residues 332–356; the sequence is FYIDTTGTKPYRGRILATKIHWGEE. The helical transmembrane segment at 357–377 threads the bilayer; it reads ATILVSMALLGCIFIVLEKFI. Residues 378 to 1039 lie on the Extracellular side of the membrane; the sequence is KSYARCVAEQ…LTQSNYLIVV (662 aa). Residues 384 to 414 are a coiled coil; the sequence is VAEQHYQIQCLQKEKEKLQTEINISLKKLDL. N-linked (GlcNAc...) asparagine glycosylation is found at N406, N430, N500, and N515. A PDEase domain is found at 533–973; that stretch reads PEITDQGIQE…QQLQQQQQQQ (441 aa). The active-site Proton donor is the H609. A divalent metal cation is bound by residues H613, H648, and D649. The interval 738–835 is disordered; sequence FPTTTNTQQP…NNSNSNNQNQ (98 aa). Over residues 740–835 the composition is skewed to low complexity; sequence TTTNTQQPSS…NNSNSNNQNQ (96 aa). N769, N791, N795, N804, N809, N823, and N826 each carry an N-linked (GlcNAc...) asparagine glycan. Residue D861 coordinates a divalent metal cation. Residues N874, N944, N1018, and N1023 are each glycosylated (N-linked (GlcNAc...) asparagine). A compositionally biased stretch (low complexity) spans 978–1019; the sequence is QQQQQQLHHHQQQQQFQHQQHQQQLQHQHQQQLNNQNQNQNQ. Residues 978-1033 are disordered; sequence QQQQQQLHHHQQQQQFQHQQHQQQLQHQHQQQLNNQNQNQNQSNSNNSNSFGLTQS. The span at 1020-1033 shows a compositional bias: polar residues; the sequence is SNSNNSNSFGLTQS.

This sequence belongs to the cyclic nucleotide phosphodiesterase family. The cofactor is a divalent metal cation.

The protein localises to the cell membrane. It carries out the reaction 3',5'-cyclic AMP + H2O = AMP + H(+). Its activity is regulated as follows. Inhibited by 3-isobutyl-1-methylxanthine (IBMX). Its function is as follows. Phosphodiesterase specific for extracellular cAMP. Involved in the degradation of extracellular cAMP specifically during multicellular development. In Dictyostelium discoideum (Social amoeba), this protein is 3',5'-cyclic-AMP phosphodiesterase 4 (Pde4).